A 443-amino-acid polypeptide reads, in one-letter code: MITIKKGLDLPINGKPEQVIRDGNAVTEVALLGEEYVGMRPSMKIHEGDTVKKGQILFEDKKNPGVVFTAPVSGTVTAINRGAKRVLQSVVIRVEGNDQETFAKYSPAELVSLSSEQVRQNLQTSGLWTALRTRPLSKIPAVDAVPSSIFVNAMDTNPLCADPAVIINEYQADFTNGLTVLTRLHNKVNLCKAAGSNIASVDNVDSHEFAGVHPAGLVGTHIHFIDPVGINKSVWHINYQDVIAIGKLFTTGELFTDRVVALAGPQVKNPRLVRTNIGANLSQLTANELADGNNRVISGSVLYGAKAEGAHDYLGRYALQVSVIAEDTEKEFFGWISPQANKYSITRTVLGHFGRKLFNFTTAENGGHRAMVPIGSYERVMPLDILPTLLLRDLEVGDTDSAQALGALELDEEDLALCTFVCPGKADYGSFLRQALDKIEKEG.

It belongs to the NqrA family. As to quaternary structure, composed of six subunits; NqrA, NqrB, NqrC, NqrD, NqrE and NqrF.

It catalyses the reaction a ubiquinone + n Na(+)(in) + NADH + H(+) = a ubiquinol + n Na(+)(out) + NAD(+). Its function is as follows. NQR complex catalyzes the reduction of ubiquinone-1 to ubiquinol by two successive reactions, coupled with the transport of Na(+) ions from the cytoplasm to the periplasm. NqrA to NqrE are probably involved in the second step, the conversion of ubisemiquinone to ubiquinol. In Mannheimia succiniciproducens (strain KCTC 0769BP / MBEL55E), this protein is Na(+)-translocating NADH-quinone reductase subunit A.